We begin with the raw amino-acid sequence, 435 residues long: Probable histidine--tRNA ligase, cytoplasmic (435 aa).

The protein belongs to the class-II aminoacyl-tRNA synthetase family.

It localises to the cytoplasm. It carries out the reaction tRNA(His) + L-histidine + ATP = L-histidyl-tRNA(His) + AMP + diphosphate + H(+). This is Probable histidine--tRNA ligase, cytoplasmic from Encephalitozoon cuniculi (strain GB-M1) (Microsporidian parasite).